Here is a 177-residue protein sequence, read N- to C-terminus: Outer envelope pore protein 21, chloroplastic (177 aa).

Topologically, residues 1–21 (METSLRYGGDSKALKIHAKEK) are cytoplasmic. A beta stranded membrane pass occupies residues 22 to 31 (LRIDTNTFFQ). Topologically, residues 32–55 (VRGGLDTKTGQPSSGSALIRHFYP) are chloroplast intermembrane. A beta stranded transmembrane segment spans residues 56–65 (NFSATLGVGV). Residues 66–81 (RYDKQDSVGVRYAKND) are Cytoplasmic-facing. The chain crosses the membrane as a beta stranded span at residues 82–91 (KLRYTVLAKK). The Chloroplast intermembrane portion of the chain corresponds to 92 to 97 (TFPVTN). A beta stranded membrane pass occupies residues 98-107 (DGLVNFKIKG). The Cytoplasmic portion of the chain corresponds to 108-120 (GCDVDQDFKEWKS). Residues 121-130 (RGGAEFSWNV) form a beta stranded membrane-spanning segment. Residues 131 to 137 (FNFQKDQ) are Chloroplast intermembrane-facing. Residues 138–147 (DVRLRIGYEA) form a beta stranded membrane-spanning segment. Residues 148-152 (FEQVP) are Cytoplasmic-facing. Residues 153–162 (YLQIRENNWT) form a beta stranded membrane-spanning segment. The Chloroplast intermembrane portion of the chain corresponds to 163-168 (FNADYK). The beta stranded transmembrane segment at 169-177 (GRWNVRYDL) threads the bilayer.

Belongs to the plastid outer envelope porin OEP21 (TC 1.B.29) family. As to expression, present in roots, shoots and leaves.

Its subcellular location is the plastid. It localises to the etioplast membrane. It is found in the chloroplast outer membrane. Voltage-dependent rectifying anion channel that facilitates the translocation between chloroplast and cytoplasm of phosphorylated carbohydrates such as triosephosphate, 3-phosphoglycerate and inorganic phosphate (Pi) depending of ATP to triosephosphate ratio in the plastidial intermembrane space; in high triosephosphate/ATP conditions (e.g. photosynthesis), export of triosphosphate from chloroplast (outward rectifying channels), but in high ATP/triosephosphate conditions (e.g. dark phase), import of phosphosolutes (inward rectifying channels). This chain is Outer envelope pore protein 21, chloroplastic (OEP21), found in Pisum sativum (Garden pea).